We begin with the raw amino-acid sequence, 587 residues long: Transport inhibitor response 1-like protein Os05g0150500 (587 aa).

Positions 6–63 (SRAACAAAAPPWHSLPDEVWEHAFSFLPAAADRGAAAGACSSWLRAERRSRRRLAVAN) constitute an F-box domain. Lys-85 contributes to the 1D-myo-inositol hexakisphosphate binding site. An interaction with auxin-responsive proteins region spans residues 92–93 (DF). Residues 124-125 (KR) and Arg-355 contribute to the 1D-myo-inositol hexakisphosphate site. The segment at 358-363 (PSDPFG) is interaction with auxin-responsive proteins. 409-411 (CFR) is a binding site for 1D-myo-inositol hexakisphosphate. The interaction with auxin-responsive proteins stretch occupies residues 413–417 (CILEP). Position 444 (Arg-444) interacts with 1D-myo-inositol hexakisphosphate. The interval 472–473 (AF) is interaction with auxin-responsive proteins. 1D-myo-inositol hexakisphosphate is bound by residues 492–493 (KK) and Arg-517.

As to quaternary structure, part of a SCF (SKP1-cullin-F-box) protein ligase complex. May interact with auxin and auxin-responsive proteins.

Its subcellular location is the nucleus. It functions in the pathway protein modification; protein ubiquitination. The protein is Transport inhibitor response 1-like protein Os05g0150500 of Oryza sativa subsp. japonica (Rice).